Here is a 751-residue protein sequence, read N- to C-terminus: Diamine oxidase [copper-containing] (751 aa).

Positions 1–19 (MPALGWAVAAILMLQTAMA) are cleaved as a signal peptide. N-linked (GlcNAc...) asparagine glycosylation is found at Asn110 and Asn168. Cys177 and Cys181 are joined by a disulfide. Catalysis depends on Asp373, which acts as the Proton acceptor. A disulfide bond links Cys391 and Cys417. Tyr461 functions as the Schiff-base intermediate with substrate; via topaquinone in the catalytic mechanism. Tyr461 carries the post-translational modification 2',4',5'-topaquinone. Positions 510 and 512 each coordinate Cu(2+). Residues Asp519, Leu520, and Asp521 each coordinate Ca(2+). Asn538 carries N-linked (GlcNAc...) asparagine glycosylation. Ca(2+) is bound by residues Glu562, Phe653, Asn656, Glu658, Asp664, and Leu665. A Cu(2+)-binding site is contributed by His675. N-linked (GlcNAc...) asparagine glycosylation occurs at Asn745.

This sequence belongs to the copper/topaquinone oxidase family. In terms of assembly, homodimer; disulfide-linked. It depends on Cu(2+) as a cofactor. Ca(2+) is required as a cofactor. L-topaquinone serves as cofactor. N-glycosylated. Post-translationally, topaquinone (TPQ) is generated by copper-dependent autoxidation of a specific tyrosyl residue. In terms of tissue distribution, widely expressed with higher expression in placenta and kidney.

It is found in the secreted. Its subcellular location is the extracellular space. It localises to the cell membrane. It catalyses the reaction histamine + O2 + H2O = imidazole-4-acetaldehyde + H2O2 + NH4(+). It carries out the reaction N(tau)-methylhistamine + O2 + H2O = 1-methylimidazole-4-acetaldehyde + H2O2 + NH4(+). The catalysed reaction is putrescine + O2 + H2O = 4-aminobutanal + H2O2 + NH4(+). The enzyme catalyses cadaverine + O2 + H2O = 5-aminopentanal + H2O2 + NH4(+). Inhibited by amiloride and amiloride analogs. Inhibited by isoniazid, cimetidine, clonidine, berenil and pentamidine. In terms of biological role, catalyzes the oxidative deamination of primary amines to the corresponding aldehydes with the concomitant production of hydrogen peroxide and ammonia. Its preferred substrates are the diamines histamine and 1-methylhistamine and it could therefore play a role in allergic and immune responses. Has a broad specificity for diamines and can also act on cadaverine and putrescine, two products of amino acid catabolism. It could also act on polyamines, like spermidine and spermine though less efficiently, and regulate various biological processes. This Homo sapiens (Human) protein is Diamine oxidase [copper-containing].